The primary structure comprises 436 residues: UPF0597 protein YhaM (436 aa).

Belongs to the UPF0597 family.

This chain is UPF0597 protein YhaM, found in Escherichia coli O6:H1 (strain CFT073 / ATCC 700928 / UPEC).